The chain runs to 508 residues: DNA-directed RNA polymerase subunit Rpo1C (508 aa).

Residues 1–123 (MIIWKDTAKN…REKYEYEKKV (123 aa)) are unknown. Positions 124 to 508 (SSQVLDVIAE…IYKGYPKTKK (385 aa)) are DNA-directed RNA polymerase subunit Rpo1C.

It belongs to the RNA polymerase beta' chain family. As to quaternary structure, part of the RNA polymerase complex.

The protein resides in the cytoplasm. It catalyses the reaction RNA(n) + a ribonucleoside 5'-triphosphate = RNA(n+1) + diphosphate. Its function is as follows. DNA-dependent RNA polymerase (RNAP) catalyzes the transcription of DNA into RNA using the four ribonucleoside triphosphates as substrates. Forms part of the jaw domain. The sequence is that of DNA-directed RNA polymerase subunit Rpo1C from Thermoplasma volcanium (strain ATCC 51530 / DSM 4299 / JCM 9571 / NBRC 15438 / GSS1).